Consider the following 272-residue polypeptide: Inositol monophosphatase (272 aa).

E71, D90, I92, and D93 together coordinate Mg(2+). A substrate-binding site is contributed by E71. Residues 92 to 95, 194 to 196, E213, and D220 each bind substrate; these read IDGT and GTA. Position 220 (D220) interacts with Mg(2+).

It belongs to the inositol monophosphatase superfamily. Mg(2+) serves as cofactor.

The protein resides in the cytoplasm. It carries out the reaction a myo-inositol phosphate + H2O = myo-inositol + phosphate. The catalysed reaction is alpha-D-galactose 1-phosphate + H2O = D-galactose + phosphate. Its pathway is polyol metabolism; myo-inositol biosynthesis; myo-inositol from D-glucose 6-phosphate: step 2/2. With respect to regulation, inhibited by Li(+), Ca(2+) and Mn(2+), but also by Mg(2+) at concentrations above 3 mM. Responsible for the provision of inositol required for synthesis of phosphatidylinositol and polyphosphoinositides. Has broad substrate specificity and can use myo-inositol monophosphates, myo-inositol 1,3-diphosphate, myo-inositol 1,4-diphosphate, scyllo-inositol-phosphate, D-galactose 1-phosphate, glucose-1-phosphate, glucose-6-phosphate, fructose-1-phosphate, beta-glycerophosphate, and 2'-AMP as substrates. The chain is Inositol monophosphatase (impa1) from Dictyostelium discoideum (Social amoeba).